The sequence spans 465 residues: ATP synthase subunit beta (465 aa).

152–159 (GGAGVGKT) provides a ligand contact to ATP.

The protein belongs to the ATPase alpha/beta chains family. In terms of assembly, F-type ATPases have 2 components, CF(1) - the catalytic core - and CF(0) - the membrane proton channel. CF(1) has five subunits: alpha(3), beta(3), gamma(1), delta(1), epsilon(1). CF(0) has three main subunits: a(1), b(2) and c(9-12). The alpha and beta chains form an alternating ring which encloses part of the gamma chain. CF(1) is attached to CF(0) by a central stalk formed by the gamma and epsilon chains, while a peripheral stalk is formed by the delta and b chains.

The protein localises to the cell membrane. The enzyme catalyses ATP + H2O + 4 H(+)(in) = ADP + phosphate + 5 H(+)(out). Produces ATP from ADP in the presence of a proton gradient across the membrane. The catalytic sites are hosted primarily by the beta subunits. The sequence is that of ATP synthase subunit beta from Desulfitobacterium hafniense (strain Y51).